Here is a 348-residue protein sequence, read N- to C-terminus: CCN family member 2 (348 aa).

A signal peptide spans 1–25 (MLASVAGPISLALVLLALCTRPAMG). Residues 26-97 (QDCSAQCQCA…NRKIGVCTAK (72 aa)) form the IGFBP N-terminal domain. 6 disulfides stabilise this stretch: Cys28–Cys53, Cys32–Cys55, Cys34–Cys56, Cys42–Cys59, Cys67–Cys81, and Cys73–Cys94. A VWFC domain is found at 100-166 (APCVFGGSVY…GKCCEEWVCD (67 aa)). One can recognise a TSP type-1 domain in the interval 197–242 (NCLVQTTEWSACSKTCGMGISTRVTNDNTFCRLEKQSRLCMVRPCE). The tract at residues 246–348 (EENIKKGKKC…YYRKMYGDMA (103 aa)) is heparin-binding. 5 cysteine pairs are disulfide-bonded: Cys255–Cys292, Cys272–Cys306, Cys283–Cys322, Cys286–Cys324, and Cys291–Cys328. The CTCK domain occupies 255-329 (CIRTPKIAKP…KTCACHYNCP (75 aa)).

The protein belongs to the CCN family. In terms of assembly, monomer. Interacts with TSKU. Testis, spleen, kidney, lung, heart, and brain (lowest level in testis and highest in lung).

Its subcellular location is the secreted. The protein resides in the extracellular space. The protein localises to the extracellular matrix. In terms of biological role, major connective tissue mitoattractant secreted by vascular endothelial cells. Promotes proliferation and differentiation of chondrocytes. Is involved in the stimulation of osteoblast differentiation and has a critical role in osteogenesis. Mediates heparin- and divalent cation-dependent cell adhesion in many cell types including fibroblasts, myofibroblasts, endothelial and epithelial cells. Enhances fibroblast growth factor-induced DNA synthesis. The chain is CCN family member 2 from Mus musculus (Mouse).